Reading from the N-terminus, the 311-residue chain is Quinolinate synthase (311 aa).

Residues His-25 and Ser-42 each contribute to the iminosuccinate site. Cys-87 provides a ligand contact to [4Fe-4S] cluster. Iminosuccinate contacts are provided by residues 113–115 and Ser-130; that span reads YIN. [4Fe-4S] cluster is bound at residue Cys-175. Iminosuccinate-binding positions include 201–203 and Thr-218; that span reads HPE. Residue Cys-268 participates in [4Fe-4S] cluster binding.

Belongs to the quinolinate synthase family. Type 2 subfamily. The cofactor is [4Fe-4S] cluster.

It localises to the cytoplasm. The catalysed reaction is iminosuccinate + dihydroxyacetone phosphate = quinolinate + phosphate + 2 H2O + H(+). Its pathway is cofactor biosynthesis; NAD(+) biosynthesis; quinolinate from iminoaspartate: step 1/1. Functionally, catalyzes the condensation of iminoaspartate with dihydroxyacetone phosphate to form quinolinate. The protein is Quinolinate synthase of Saccharolobus solfataricus (strain ATCC 35092 / DSM 1617 / JCM 11322 / P2) (Sulfolobus solfataricus).